A 310-amino-acid chain; its full sequence is tRNA-cytidine(32) 2-sulfurtransferase (310 aa).

A PP-loop motif motif is present at residues 44 to 49 (SGGKDS). Residues C119, C122, and C210 each coordinate [4Fe-4S] cluster.

This sequence belongs to the TtcA family. As to quaternary structure, homodimer. Mg(2+) serves as cofactor. Requires [4Fe-4S] cluster as cofactor.

The protein resides in the cytoplasm. The enzyme catalyses cytidine(32) in tRNA + S-sulfanyl-L-cysteinyl-[cysteine desulfurase] + AH2 + ATP = 2-thiocytidine(32) in tRNA + L-cysteinyl-[cysteine desulfurase] + A + AMP + diphosphate + H(+). Its pathway is tRNA modification. In terms of biological role, catalyzes the ATP-dependent 2-thiolation of cytidine in position 32 of tRNA, to form 2-thiocytidine (s(2)C32). The sulfur atoms are provided by the cysteine/cysteine desulfurase (IscS) system. This Saccharophagus degradans (strain 2-40 / ATCC 43961 / DSM 17024) protein is tRNA-cytidine(32) 2-sulfurtransferase.